The sequence spans 572 residues: Urease subunit alpha (572 aa).

A Urease domain is found at 134–572 (GGIDSHIHFI…LPLTQRYFLF (439 aa)). Positions 139, 141, and 222 each coordinate Ni(2+). The residue at position 222 (lysine 222) is an N6-carboxylysine. Histidine 224 contributes to the substrate binding site. 2 residues coordinate Ni(2+): histidine 251 and histidine 277. Histidine 325 acts as the Proton donor in catalysis. Aspartate 365 lines the Ni(2+) pocket.

The protein belongs to the metallo-dependent hydrolases superfamily. Urease alpha subunit family. As to quaternary structure, heterotrimer of UreA (gamma), UreB (beta) and UreC (alpha) subunits. Three heterotrimers associate to form the active enzyme. Requires Ni cation as cofactor. Post-translationally, carboxylation allows a single lysine to coordinate two nickel ions.

It is found in the cytoplasm. It catalyses the reaction urea + 2 H2O + H(+) = hydrogencarbonate + 2 NH4(+). It participates in nitrogen metabolism; urea degradation; CO(2) and NH(3) from urea (urease route): step 1/1. The protein is Urease subunit alpha of Variovorax paradoxus (strain S110).